Reading from the N-terminus, the 281-residue chain is Undecaprenyl-diphosphatase (281 aa).

7 helical membrane passes run 49–69, 92–112, 116–136, 152–172, 196–216, 224–244, and 257–277; these read SANT…AWIF, LHIF…DDFI, LFSV…MIAA, MTYK…WPGF, TFIM…ASNI, ILFY…SIRL, and FAIY…GFGI.

This sequence belongs to the UppP family.

Its subcellular location is the cell membrane. The catalysed reaction is di-trans,octa-cis-undecaprenyl diphosphate + H2O = di-trans,octa-cis-undecaprenyl phosphate + phosphate + H(+). In terms of biological role, catalyzes the dephosphorylation of undecaprenyl diphosphate (UPP). Confers resistance to bacitracin. This is Undecaprenyl-diphosphatase from Macrococcus caseolyticus (strain JCSC5402) (Macrococcoides caseolyticum).